A 256-amino-acid chain; its full sequence is Undecaprenyl-diphosphatase (256 aa).

7 helical membrane passes run Val8 to Ile28, Phe41 to Tyr61, Ile75 to Gly95, Phe96 to Ile116, Ala175 to Ile195, Ile208 to Leu228, and Leu236 to Phe256.

The protein belongs to the UppP family.

The protein resides in the cell inner membrane. It carries out the reaction di-trans,octa-cis-undecaprenyl diphosphate + H2O = di-trans,octa-cis-undecaprenyl phosphate + phosphate + H(+). Catalyzes the dephosphorylation of undecaprenyl diphosphate (UPP). Confers resistance to bacitracin. The chain is Undecaprenyl-diphosphatase from Aquifex aeolicus (strain VF5).